The sequence spans 126 residues: UPF0292 protein TSIB_0423 (126 aa).

Residues 20–100 (NGVILVEGMR…RVDTNTRREL (81 aa)) form the Toprim domain. E26, D69, and D71 together coordinate Mg(2+).

Belongs to the UPF0292 family. Requires Mg(2+) as cofactor.

This is UPF0292 protein TSIB_0423 from Thermococcus sibiricus (strain DSM 12597 / MM 739).